A 247-amino-acid chain; its full sequence is Cell division protein ZapD (247 aa).

It belongs to the ZapD family. In terms of assembly, interacts with FtsZ.

Its subcellular location is the cytoplasm. Cell division factor that enhances FtsZ-ring assembly. Directly interacts with FtsZ and promotes bundling of FtsZ protofilaments, with a reduction in FtsZ GTPase activity. The chain is Cell division protein ZapD from Escherichia coli O7:K1 (strain IAI39 / ExPEC).